Here is a 112-residue protein sequence, read N- to C-terminus: uncharacterized protein (112 aa).

This is an uncharacterized protein from Caenorhabditis elegans.